Consider the following 64-residue polypeptide: Large ribosomal subunit protein bL33 (64 aa).

Positions threonine 19–asparagine 40 are disordered.

This sequence belongs to the bacterial ribosomal protein bL33 family.

In Prochlorococcus marinus (strain MIT 9215), this protein is Large ribosomal subunit protein bL33.